Consider the following 438-residue polypeptide: 23S rRNA (uracil(1939)-C(5))-methyltransferase RlmD (438 aa).

Positions 10–69 (KASVNTKHLSVDVVRLDHNGAGIAFVDKKPVFIEGALPGEKAIIQFIEQKKQFSRAKLIK) constitute a TRAM domain. [4Fe-4S] cluster contacts are provided by Cys82, Cys88, Cys91, and Cys169. S-adenosyl-L-methionine-binding residues include Gln272, Phe301, Asn306, Glu322, Asn349, and Asp370. Cys396 (nucleophile) is an active-site residue.

Belongs to the class I-like SAM-binding methyltransferase superfamily. RNA M5U methyltransferase family. RlmD subfamily.

It carries out the reaction uridine(1939) in 23S rRNA + S-adenosyl-L-methionine = 5-methyluridine(1939) in 23S rRNA + S-adenosyl-L-homocysteine + H(+). Its function is as follows. Catalyzes the formation of 5-methyl-uridine at position 1939 (m5U1939) in 23S rRNA. This chain is 23S rRNA (uracil(1939)-C(5))-methyltransferase RlmD, found in Aliivibrio fischeri (strain MJ11) (Vibrio fischeri).